The primary structure comprises 472 residues: Methanethiol oxidase (472 aa).

The residue at position 2 (A2) is an N-acetylalanine. Phosphoserine is present on residues S111, S371, and S467.

The protein belongs to the selenium-binding protein family. Interacts with USP33. The N-terminus is blocked.

The protein resides in the nucleus. The protein localises to the cytoplasm. It localises to the cytosol. Its subcellular location is the membrane. The enzyme catalyses methanethiol + O2 + H2O = hydrogen sulfide + formaldehyde + H2O2 + H(+). The protein operates within organosulfur degradation. Catalyzes the oxidation of methanethiol, an organosulfur compound known to be produced in substantial amounts by gut bacteria. Selenium-binding protein which may be involved in the sensing of reactive xenobiotics in the cytoplasm. May be involved in intra-Golgi protein transport. This Pongo abelii (Sumatran orangutan) protein is Methanethiol oxidase (SELENBP1).